The primary structure comprises 559 residues: 2-succinyl-5-enolpyruvyl-6-hydroxy-3-cyclohexene-1-carboxylate synthase (559 aa).

The protein belongs to the TPP enzyme family. MenD subfamily. In terms of assembly, homodimer. Mg(2+) is required as a cofactor. Requires Mn(2+) as cofactor. Thiamine diphosphate serves as cofactor.

The catalysed reaction is isochorismate + 2-oxoglutarate + H(+) = 5-enolpyruvoyl-6-hydroxy-2-succinyl-cyclohex-3-ene-1-carboxylate + CO2. The protein operates within quinol/quinone metabolism; 1,4-dihydroxy-2-naphthoate biosynthesis; 1,4-dihydroxy-2-naphthoate from chorismate: step 2/7. Its pathway is quinol/quinone metabolism; menaquinone biosynthesis. Its function is as follows. Catalyzes the thiamine diphosphate-dependent decarboxylation of 2-oxoglutarate and the subsequent addition of the resulting succinic semialdehyde-thiamine pyrophosphate anion to isochorismate to yield 2-succinyl-5-enolpyruvyl-6-hydroxy-3-cyclohexene-1-carboxylate (SEPHCHC). The sequence is that of 2-succinyl-5-enolpyruvyl-6-hydroxy-3-cyclohexene-1-carboxylate synthase from Edwardsiella ictaluri (strain 93-146).